Here is a 390-residue protein sequence, read N- to C-terminus: Homoserine O-acetyltransferase (390 aa).

Positions 55–366 (NAILINHAFS…ESDCGHDAFL (312 aa)) constitute an AB hydrolase-1 domain. Ser163 (nucleophile) is an active-site residue. Arg232 serves as a coordination point for substrate. Catalysis depends on residues Asp329 and His362. Asp363 contributes to the substrate binding site.

The protein belongs to the AB hydrolase superfamily. MetX family. As to quaternary structure, homodimer.

It localises to the cytoplasm. It catalyses the reaction L-homoserine + acetyl-CoA = O-acetyl-L-homoserine + CoA. The protein operates within amino-acid biosynthesis; L-methionine biosynthesis via de novo pathway; O-acetyl-L-homoserine from L-homoserine: step 1/1. In terms of biological role, transfers an acetyl group from acetyl-CoA to L-homoserine, forming acetyl-L-homoserine. This is Homoserine O-acetyltransferase from Desulfotalea psychrophila (strain LSv54 / DSM 12343).